A 216-amino-acid chain; its full sequence is Guanylate kinase (216 aa).

A Guanylate kinase-like domain is found at 11 to 189 (GVLIVISGPS…AVKKIEAILL (179 aa)). Residue 18–25 (GPSGAGKG) coordinates ATP.

Belongs to the guanylate kinase family.

It localises to the cytoplasm. The enzyme catalyses GMP + ATP = GDP + ADP. Essential for recycling GMP and indirectly, cGMP. This Clostridium perfringens (strain SM101 / Type A) protein is Guanylate kinase.